The sequence spans 298 residues: Protoheme IX farnesyltransferase (298 aa).

Transmembrane regions (helical) follow at residues 16–36 (VVAL…PDMP), 45–65 (ALGF…NQLL), 93–113 (VFAG…VNVI), 114–134 (TAVL…VYLK), 141–161 (IVIG…AVTG), 172–192 (SLLV…LAIF), 223–243 (VLLA…VFYL), 244–264 (GGAV…LNPP), and 277–297 (IVYL…LPWV).

The protein belongs to the UbiA prenyltransferase family. Protoheme IX farnesyltransferase subfamily.

It is found in the cell inner membrane. It catalyses the reaction heme b + (2E,6E)-farnesyl diphosphate + H2O = Fe(II)-heme o + diphosphate. Its pathway is porphyrin-containing compound metabolism; heme O biosynthesis; heme O from protoheme: step 1/1. Its function is as follows. Converts heme B (protoheme IX) to heme O by substitution of the vinyl group on carbon 2 of heme B porphyrin ring with a hydroxyethyl farnesyl side group. In Xanthomonas oryzae pv. oryzae (strain MAFF 311018), this protein is Protoheme IX farnesyltransferase.